The sequence spans 564 residues: Apyrase (564 aa).

An N-terminal signal peptide occupies residues 1-25 (MAGKPGIQLFVIFLLLSSFAAVVWA). A divalent metal cation is bound by residues Asp48, His50, Asp99, Asn131, His234, and His258. Arg371 lines the AMP pocket. Asn391 carries an N-linked (GlcNAc...) asparagine glycan. Residues Arg406, Phe425, and Asp515 each coordinate AMP.

Belongs to the 5'-nucleotidase family. It depends on a divalent metal cation as a cofactor. Female salivary gland (at protein level). Low-level expression in male tissues. Not detected in female carcasses without salivary glands.

It localises to the secreted. The catalysed reaction is a ribonucleoside 5'-triphosphate + 2 H2O = a ribonucleoside 5'-phosphate + 2 phosphate + 2 H(+). Its function is as follows. Facilitates hematophagy by inhibiting ADP-dependent platelet aggregation in the host. Cleaves adenosine triphosphate (ATP) and adenosine diphosphate (ADP) to adenosine monophosphate (AMP) and inorganic phosphate. May reduce probing time by facilitating the speed of locating blood. The chain is Apyrase from Aedes albopictus (Asian tiger mosquito).